We begin with the raw amino-acid sequence, 885 residues long: Envelope glycoprotein gp160 (885 aa).

Positions 1–23 are cleaved as a signal peptide; the sequence is MGCLGNQLLIALLLVSVLEICCV. The Extracellular segment spans residues 24–700; sequence QYVTVFYGVP…TSWIRYIQYG (677 aa). N37 carries an N-linked (GlcNAc...) asparagine; by host glycan. A disulfide bridge connects residues C44 and C57. 17 N-linked (GlcNAc...) asparagine; by host glycosylation sites follow: N70, N114, N148, N156, N173, N186, N201, N213, N245, N255, N279, N285, N296, N307, N317, N372, and N378. Intrachain disulfides connect C101-C221, C108-C212, C113-C170, C234-C264, and C244-C256. The V1 stretch occupies residues 113-169; sequence CNKTETDRWGLTGNAGTTTTAITTTATPSVAENVINESNPCIKNNSCAGLEQEPMIG. A V2 region spans residues 170-212; sequence CKFNMTGLNRDKKKEYNETWYSRDLICEQSANESESKCYMHHC. The interval 312–344 is V3; that stretch reads CRRPENKTVLPVTIMSGLVFHSQPINERPKQAW. A disulfide bridge links C312 with C345. 2 disulfide bridges follow: C396–C465 and C403–C438. The V4 stretch occupies residues 403-438; it reads CKMNWFLNWVEDRDQKGGRWKQQNRKEQQKKNYVPC. 3 N-linked (GlcNAc...) asparagine; by host glycosylation sites follow: N466, N482, and N485. The segment at 481–488 is V5; sequence SNETNITM. The interval 532–552 is fusion peptide; the sequence is GVFVLGFLGFLATAGSAMGAA. An immunosuppression region spans residues 595-611; sequence LQTRVTAIEKYLKDQAQ. Residues N631, N640, and N656 are each glycosylated (N-linked (GlcNAc...) asparagine; by host). Residues 640–672 are a coiled coil; the sequence is NMTWQEWERQVDFLEANITQLLEEAQIQQEKNM. The tract at residues 677 to 698 is MPER; binding to GalCer; it reads KLNSWDIFGNWFDLTSWIRYIQ. The helical transmembrane segment at 701–721 threads the bilayer; sequence VLIVLGVIGLRIVIYVVQMLA. The Cytoplasmic segment spans residues 722 to 885; the sequence is RLRQGYRPVF…IRQGLELTLL (164 aa). The YXXV motif; contains endocytosis signal motif lies at 727–730; that stretch reads YRPV. The segment at 743–764 is disordered; that stretch reads IHKGQEPPTKEGEEGDGGDRGG. A compositionally biased stretch (basic and acidic residues) spans 745–764; the sequence is KGQEPPTKEGEEGDGGDRGG. Residue C793 is the site of S-palmitoyl cysteine; by host attachment. Residues 884–885 carry the Di-leucine internalization motif motif; it reads LL.

The mature envelope protein (Env) consists of a homotrimer of non-covalently associated gp120-gp41 heterodimers. The resulting complex protrudes from the virus surface as a spike. Interacts with host CD4 and CCR5. Gp120 also interacts with the C-type lectins CD209/DC-SIGN and CLEC4M/DC-SIGNR (collectively referred to as DC-SIGN(R)). As to quaternary structure, the mature envelope protein (Env) consists of a homotrimer of non-covalently associated gp120-gp41 heterodimers. The resulting complex protrudes from the virus surface as a spike. In terms of processing, specific enzymatic cleavages in vivo yield mature proteins. Envelope glycoproteins are synthesized as an inactive precursor that is heavily N-glycosylated and processed likely by host cell furin in the Golgi to yield the mature SU and TM proteins. The cleavage site between SU and TM requires the minimal sequence [KR]-X-[KR]-R. Post-translationally, palmitoylation of the transmembrane protein and of Env polyprotein (prior to its proteolytic cleavage) is essential for their association with host cell membrane lipid rafts. Palmitoylation is therefore required for envelope trafficking to classical lipid rafts, but not for viral replication.

It localises to the virion membrane. Its subcellular location is the host cell membrane. It is found in the host endosome membrane. Its function is as follows. The surface protein gp120 (SU) attaches the virus to the host lymphoid cell by binding to the primary receptor CD4. This interaction induces a structural rearrangement creating a high affinity binding site for a chemokine coreceptor like CCR5. This peculiar 2 stage receptor-interaction strategy allows gp120 to maintain the highly conserved coreceptor-binding site in a cryptic conformation, protected from neutralizing antibodies. These changes are transmitted to the transmembrane protein gp41 and are thought to activate its fusogenic potential by unmasking its fusion peptide. In terms of biological role, surface protein gp120 (SU) may target the virus to gut-associated lymphoid tissue (GALT) by binding host ITGA4/ITGB7 (alpha-4/beta-7 integrins), a complex that mediates T-cell migration to the GALT. Interaction between gp120 and ITGA4/ITGB7 would allow the virus to enter GALT early in the infection, infecting and killing most of GALT's resting CD4+ T-cells. This T-cell depletion is believed to be the major insult to the host immune system leading to AIDS. The surface protein gp120 is a ligand for CD209/DC-SIGN and CLEC4M/DC-SIGNR, which are respectively found on dendritic cells (DCs), and on endothelial cells of liver sinusoids and lymph node sinuses. These interactions allow capture of viral particles at mucosal surfaces by these cells and subsequent transmission to permissive cells. DCs are professional antigen presenting cells, critical for host immunity by inducing specific immune responses against a broad variety of pathogens. They act as sentinels in various tissues where they take up antigen, process it, and present it to T-cells following migration to lymphoid organs. SIV subverts the migration properties of dendritic cells to gain access to CD4+ T-cells in lymph nodes. Virus transmission to permissive T-cells occurs either in trans (without DCs infection, through viral capture and transmission), or in cis (following DCs productive infection, through the usual CD4-gp120 interaction), thereby inducing a robust infection. In trans infection, bound virions remain infectious over days and it is proposed that they are not degraded, but protected in non-lysosomal acidic organelles within the DCs close to the cell membrane thus contributing to the viral infectious potential during DCs' migration from the periphery to the lymphoid tissues. On arrival at lymphoid tissues, intact virions recycle back to DCs' cell surface allowing virus transmission to CD4+ T-cells. Virion capture also seems to lead to MHC-II-restricted viral antigen presentation, and probably to the activation of SIV-specific CD4+ cells. Functionally, the transmembrane protein gp41 (TM) acts as a class I viral fusion protein. Under the current model, the protein has at least 3 conformational states: pre-fusion native state, pre-hairpin intermediate state, and post-fusion hairpin state. During fusion of viral and target intracellular membranes, the coiled coil regions (heptad repeats) assume a trimer-of-hairpins structure, positioning the fusion peptide in close proximity to the C-terminal region of the ectodomain. The formation of this structure appears to drive apposition and subsequent fusion of viral and target cell membranes. Complete fusion occurs in host cell endosomes. The virus undergoes clathrin-dependent internalization long before endosomal fusion, thus minimizing the surface exposure of conserved viral epitopes during fusion and reducing the efficacy of inhibitors targeting these epitopes. Membranes fusion leads to delivery of the nucleocapsid into the cytoplasm. Its function is as follows. The envelope glycoprotein gp160 precursor down-modulates cell surface CD4 antigen by interacting with it in the endoplasmic reticulum and blocking its transport to the cell surface. In terms of biological role, the gp120-gp41 heterodimer allows rapid transcytosis of the virus through CD4 negative cells such as simple epithelial monolayers of the intestinal, rectal and endocervical epithelial barriers. Both gp120 and gp41 specifically recognize glycosphingolipids galactosyl-ceramide (GalCer) or 3' sulfo-galactosyl-ceramide (GalS) present in the lipid rafts structures of epithelial cells. Binding to these alternative receptors allows the rapid transcytosis of the virus through the epithelial cells. This transcytotic vesicle-mediated transport of virions from the apical side to the basolateral side of the epithelial cells does not involve infection of the cells themselves. The polypeptide is Envelope glycoprotein gp160 (env) (Cercopithecidae (Old World monkeys)).